Reading from the N-terminus, the 91-residue chain is Signal recognition particle 19 kDa protein (91 aa).

It belongs to the SRP19 family. Part of the signal recognition particle protein translocation system, which is composed of SRP and FtsY. Archaeal SRP consists of a 7S RNA molecule of 300 nucleotides and two protein subunits: SRP54 and SRP19.

It localises to the cytoplasm. Functionally, involved in targeting and insertion of nascent membrane proteins into the cytoplasmic membrane. Binds directly to 7S RNA and mediates binding of the 54 kDa subunit of the SRP. This chain is Signal recognition particle 19 kDa protein, found in Methanothermobacter thermautotrophicus (strain ATCC 29096 / DSM 1053 / JCM 10044 / NBRC 100330 / Delta H) (Methanobacterium thermoautotrophicum).